Reading from the N-terminus, the 85-residue chain is MAHKKAGGSTRNGRDSESKRLGVKRFGGESVLAGSIIVRQRGTKFHAGNNVGCGRDHTLFALADGKVKFEVKGPKNRKFISIEAE.

Residues 1–21 (MAHKKAGGSTRNGRDSESKRL) are disordered.

Belongs to the bacterial ribosomal protein bL27 family.

In Photorhabdus laumondii subsp. laumondii (strain DSM 15139 / CIP 105565 / TT01) (Photorhabdus luminescens subsp. laumondii), this protein is Large ribosomal subunit protein bL27.